Reading from the N-terminus, the 502-residue chain is Glycerol kinase (502 aa).

Residue Thr14 coordinates ADP. Positions 14, 15, and 16 each coordinate ATP. Sn-glycerol 3-phosphate is bound at residue Thr14. Residue Arg18 participates in ADP binding. Sn-glycerol 3-phosphate is bound by residues Arg84, Glu85, and Tyr136. 3 residues coordinate glycerol: Arg84, Glu85, and Tyr136. Phosphohistidine; by HPr is present on His232. Asp246 provides a ligand contact to sn-glycerol 3-phosphate. Positions 246 and 247 each coordinate glycerol. Residues Thr268 and Gly311 each contribute to the ADP site. ATP is bound by residues Thr268, Gly311, Gln315, and Gly412. The ADP site is built by Gly412 and Asn416.

Belongs to the FGGY kinase family. Homotetramer and homodimer (in equilibrium). Post-translationally, the phosphoenolpyruvate-dependent sugar phosphotransferase system (PTS), including enzyme I, and histidine-containing protein (HPr) are required for the phosphorylation, which leads to the activation of the enzyme.

It catalyses the reaction glycerol + ATP = sn-glycerol 3-phosphate + ADP + H(+). The protein operates within polyol metabolism; glycerol degradation via glycerol kinase pathway; sn-glycerol 3-phosphate from glycerol: step 1/1. With respect to regulation, activated by phosphorylation and inhibited by fructose 1,6-bisphosphate (FBP). Functionally, key enzyme in the regulation of glycerol uptake and metabolism. Catalyzes the phosphorylation of glycerol to yield sn-glycerol 3-phosphate. This is Glycerol kinase from Streptococcus gordonii (strain Challis / ATCC 35105 / BCRC 15272 / CH1 / DL1 / V288).